Here is a 696-residue protein sequence, read N- to C-terminus: Verrucotoxin subunit beta (696 aa).

The 191-residue stretch at 506–696 (HMPGVETIKD…GCTTESQWSN (191 aa)) folds into the B30.2/SPRY domain.

It belongs to the SNTX/VTX toxin family. As to quaternary structure, tetramer composed of 2 alpha and 2 beta subunits. In terms of processing, glycosylated. In terms of tissue distribution, expressed by the venom gland.

It is found in the secreted. Its function is as follows. This lethal (towards mice) toxin induces hemolytic, cytolytic and hypotensive activities. Inhibits calcium channels and may activate ATP-sensitive potassium channels in frog atrial heart muscle. In guinea-pig ventricular myocytes, it modulates calcium channel activity through the beta-adrenoceptor-cAMP-PKA pathway (ADRB). In Synanceia verrucosa (Reef stonefish), this protein is Verrucotoxin subunit beta.